A 137-amino-acid polypeptide reads, in one-letter code: Large ribosomal subunit protein uL16 (137 aa).

The protein belongs to the universal ribosomal protein uL16 family. Part of the 50S ribosomal subunit.

Binds 23S rRNA and is also seen to make contacts with the A and possibly P site tRNAs. The polypeptide is Large ribosomal subunit protein uL16 (Leuconostoc citreum (strain KM20)).